A 389-amino-acid polypeptide reads, in one-letter code: S-adenosylmethionine synthase (389 aa).

Residue His-19 coordinates ATP. Asp-21 lines the Mg(2+) pocket. Glu-47 provides a ligand contact to K(+). Residues Glu-60 and Gln-103 each contribute to the L-methionine site. The segment at 103 to 113 is flexible loop; sequence QSVDIAQGVDR. ATP contacts are provided by residues 168-170, 234-235, Asp-243, 249-250, Ala-266, and Lys-270; these read DGK, RF, and RK. Asp-243 provides a ligand contact to L-methionine. Lys-274 contributes to the L-methionine binding site.

The protein belongs to the AdoMet synthase family. Homotetramer; dimer of dimers. The cofactor is Mg(2+). K(+) is required as a cofactor.

It localises to the cytoplasm. The catalysed reaction is L-methionine + ATP + H2O = S-adenosyl-L-methionine + phosphate + diphosphate. The protein operates within amino-acid biosynthesis; S-adenosyl-L-methionine biosynthesis; S-adenosyl-L-methionine from L-methionine: step 1/1. Functionally, catalyzes the formation of S-adenosylmethionine (AdoMet) from methionine and ATP. The overall synthetic reaction is composed of two sequential steps, AdoMet formation and the subsequent tripolyphosphate hydrolysis which occurs prior to release of AdoMet from the enzyme. The sequence is that of S-adenosylmethionine synthase from Maridesulfovibrio salexigens (strain ATCC 14822 / DSM 2638 / NCIMB 8403 / VKM B-1763) (Desulfovibrio salexigens).